Reading from the N-terminus, the 193-residue chain is MYAYLKGKIMTILPTHLVIEVSGIGYECLTPNPYRFNHQLDQMITLHTQLVVREDAQLLYGFKDEEEKAMFNALNKVTGIGPKSALAILATSTPQEIIKAIESESESYLIKFPGIGKKTARQIILDLKGKLTITDESELFKEVNDTLLNEALLAFEALGYSKREITKIEKELKKKQFSTVDEYVKQGLQMFVS.

The interval M1–K63 is domain I. Positions D64 to K141 are domain II. The interval K141–E142 is flexible linker. A domain III region spans residues V143–S193.

Belongs to the RuvA family. In terms of assembly, homotetramer. Forms an RuvA(8)-RuvB(12)-Holliday junction (HJ) complex. HJ DNA is sandwiched between 2 RuvA tetramers; dsDNA enters through RuvA and exits via RuvB. An RuvB hexamer assembles on each DNA strand where it exits the tetramer. Each RuvB hexamer is contacted by two RuvA subunits (via domain III) on 2 adjacent RuvB subunits; this complex drives branch migration. In the full resolvosome a probable DNA-RuvA(4)-RuvB(12)-RuvC(2) complex forms which resolves the HJ.

The protein resides in the cytoplasm. Its function is as follows. The RuvA-RuvB-RuvC complex processes Holliday junction (HJ) DNA during genetic recombination and DNA repair, while the RuvA-RuvB complex plays an important role in the rescue of blocked DNA replication forks via replication fork reversal (RFR). RuvA specifically binds to HJ cruciform DNA, conferring on it an open structure. The RuvB hexamer acts as an ATP-dependent pump, pulling dsDNA into and through the RuvAB complex. HJ branch migration allows RuvC to scan DNA until it finds its consensus sequence, where it cleaves and resolves the cruciform DNA. This is Holliday junction branch migration complex subunit RuvA from Macrococcus caseolyticus (strain JCSC5402) (Macrococcoides caseolyticum).